The sequence spans 287 residues: Large ribosomal subunit protein uL2 (287 aa).

Residues 221–287 (RGSVMNPCDH…SKRSRGGRDS (67 aa)) form a disordered region. Residues 258–287 (KTRKRNKPSNKFVLRKRRKTSKRSRGGRDS) show a composition bias toward basic residues.

This sequence belongs to the universal ribosomal protein uL2 family. In terms of assembly, part of the 50S ribosomal subunit. Forms a bridge to the 30S subunit in the 70S ribosome.

In terms of biological role, one of the primary rRNA binding proteins. Required for association of the 30S and 50S subunits to form the 70S ribosome, for tRNA binding and peptide bond formation. It has been suggested to have peptidyltransferase activity; this is somewhat controversial. Makes several contacts with the 16S rRNA in the 70S ribosome. This is Large ribosomal subunit protein uL2 from Synechococcus sp. (strain WH7803).